We begin with the raw amino-acid sequence, 73 residues long: Salivary protein FS48 (73 aa).

The first 21 residues, 1–21 (MKFAFAIFVVLAILHTELISA), serve as a signal peptide directing secretion.

It localises to the secreted. Salivary protein that inhibits host voltage-gated potassium channels Kv1.1/KCNA1, Kv1.2/KCNA2 and Kv1.3/KCNA3 likely via a voltage-independent pore-blocking mechanism. Suppresses expression of the Kv1.3/KCNA3 channel in lipopolysaccharide (LPS)-stimulated mouse macrophages and human T-cells. Down-regulates secretion of nitric oxide (NO) and inflammatory cytokines, such as TNF-alpha/TNF, IL-1beta/IL1B and IL6, in LPS-stimulated mouse macrophages in a manner dependent on Kv1.3/KCNA3 channel blockage. Reduces activation of MAPK and NF-kappa-B signaling pathways in LPS-stimulated mouse macrophages. Modulates intracellular Ca(2+) signaling in human PMA/ionomycin-triggered T-cells. Interferes with the activation of the MAPK, NF-kappa-B and NFATc1 pathways in human PMA/ionomycin-triggered T-cells. Reduces proliferation of human PMA/ionomycin-triggered T-cells. Down-regulates secretion of cytokines, such as TNF-alpha/TNF and IL2, in human PMA/ionomycin-triggered T-cells. The sequence is that of Salivary protein FS48 from Xenopsylla cheopis (Oriental rat flea).